A 115-amino-acid polypeptide reads, in one-letter code: NADH-ubiquinone oxidoreductase chain 3 (115 aa).

Helical transmembrane passes span Phe3 to Trp23, Phe55 to Leu75, and Leu84 to Tyr104.

The protein belongs to the complex I subunit 3 family. As to quaternary structure, core subunit of respiratory chain NADH dehydrogenase (Complex I) which is composed of 45 different subunits. Interacts with TMEM186. Interacts with TMEM242.

It localises to the mitochondrion inner membrane. The enzyme catalyses a ubiquinone + NADH + 5 H(+)(in) = a ubiquinol + NAD(+) + 4 H(+)(out). Functionally, core subunit of the mitochondrial membrane respiratory chain NADH dehydrogenase (Complex I) which catalyzes electron transfer from NADH through the respiratory chain, using ubiquinone as an electron acceptor. Essential for the catalytic activity of complex I. This is NADH-ubiquinone oxidoreductase chain 3 from Pan troglodytes (Chimpanzee).